A 347-amino-acid polypeptide reads, in one-letter code: Holliday junction branch migration complex subunit RuvB (347 aa).

The segment at 1-186 (MKDENSINFL…FGITARFELY (186 aa)) is large ATPase domain (RuvB-L). ATP contacts are provided by residues leucine 25, arginine 26, glycine 67, lysine 70, threonine 71, threonine 72, 133–135 (EDY), arginine 176, tyrosine 186, and arginine 223. Residue threonine 71 participates in Mg(2+) binding. Residues 187 to 257 (SEIELVEIIK…IVSIGLEMLR (71 aa)) form a small ATPAse domain (RuvB-S) region. Positions 260–347 (GEGLDEQDRN…DISENQRVSF (88 aa)) are head domain (RuvB-H). DNA-binding residues include arginine 315 and arginine 320.

The protein belongs to the RuvB family. Homohexamer. Forms an RuvA(8)-RuvB(12)-Holliday junction (HJ) complex. HJ DNA is sandwiched between 2 RuvA tetramers; dsDNA enters through RuvA and exits via RuvB. An RuvB hexamer assembles on each DNA strand where it exits the tetramer. Each RuvB hexamer is contacted by two RuvA subunits (via domain III) on 2 adjacent RuvB subunits; this complex drives branch migration. In the full resolvosome a probable DNA-RuvA(4)-RuvB(12)-RuvC(2) complex forms which resolves the HJ.

The protein localises to the cytoplasm. The catalysed reaction is ATP + H2O = ADP + phosphate + H(+). In terms of biological role, the RuvA-RuvB-RuvC complex processes Holliday junction (HJ) DNA during genetic recombination and DNA repair, while the RuvA-RuvB complex plays an important role in the rescue of blocked DNA replication forks via replication fork reversal (RFR). RuvA specifically binds to HJ cruciform DNA, conferring on it an open structure. The RuvB hexamer acts as an ATP-dependent pump, pulling dsDNA into and through the RuvAB complex. RuvB forms 2 homohexamers on either side of HJ DNA bound by 1 or 2 RuvA tetramers; 4 subunits per hexamer contact DNA at a time. Coordinated motions by a converter formed by DNA-disengaged RuvB subunits stimulates ATP hydrolysis and nucleotide exchange. Immobilization of the converter enables RuvB to convert the ATP-contained energy into a lever motion, pulling 2 nucleotides of DNA out of the RuvA tetramer per ATP hydrolyzed, thus driving DNA branch migration. The RuvB motors rotate together with the DNA substrate, which together with the progressing nucleotide cycle form the mechanistic basis for DNA recombination by continuous HJ branch migration. Branch migration allows RuvC to scan DNA until it finds its consensus sequence, where it cleaves and resolves cruciform DNA. The sequence is that of Holliday junction branch migration complex subunit RuvB from Borrelia garinii subsp. bavariensis (strain ATCC BAA-2496 / DSM 23469 / PBi) (Borreliella bavariensis).